A 299-amino-acid chain; its full sequence is Phosphoribosylaminoimidazole-succinocarboxamide synthase (299 aa).

Belongs to the SAICAR synthetase family.

The catalysed reaction is 5-amino-1-(5-phospho-D-ribosyl)imidazole-4-carboxylate + L-aspartate + ATP = (2S)-2-[5-amino-1-(5-phospho-beta-D-ribosyl)imidazole-4-carboxamido]succinate + ADP + phosphate + 2 H(+). Its pathway is purine metabolism; IMP biosynthesis via de novo pathway; 5-amino-1-(5-phospho-D-ribosyl)imidazole-4-carboxamide from 5-amino-1-(5-phospho-D-ribosyl)imidazole-4-carboxylate: step 1/2. In Maridesulfovibrio salexigens (strain ATCC 14822 / DSM 2638 / NCIMB 8403 / VKM B-1763) (Desulfovibrio salexigens), this protein is Phosphoribosylaminoimidazole-succinocarboxamide synthase.